The sequence spans 283 residues: tRNA (guanine-N(1)-)-methyltransferase (283 aa).

S-adenosyl-L-methionine contacts are provided by residues G113 and 133-138; that span reads IGDYVL.

This sequence belongs to the RNA methyltransferase TrmD family. In terms of assembly, homodimer.

Its subcellular location is the cytoplasm. It carries out the reaction guanosine(37) in tRNA + S-adenosyl-L-methionine = N(1)-methylguanosine(37) in tRNA + S-adenosyl-L-homocysteine + H(+). Its function is as follows. Specifically methylates guanosine-37 in various tRNAs. The sequence is that of tRNA (guanine-N(1)-)-methyltransferase from Parafrankia sp. (strain EAN1pec).